Here is a 408-residue protein sequence, read N- to C-terminus: Arginine biosynthesis bifunctional protein ArgJ (408 aa).

Substrate-binding residues include Thr-156, Lys-182, Thr-193, Glu-279, Asn-403, and Ser-408. The active-site Nucleophile is the Thr-193.

It belongs to the ArgJ family. Heterotetramer of two alpha and two beta chains.

Its subcellular location is the cytoplasm. The enzyme catalyses N(2)-acetyl-L-ornithine + L-glutamate = N-acetyl-L-glutamate + L-ornithine. The catalysed reaction is L-glutamate + acetyl-CoA = N-acetyl-L-glutamate + CoA + H(+). Its pathway is amino-acid biosynthesis; L-arginine biosynthesis; L-ornithine and N-acetyl-L-glutamate from L-glutamate and N(2)-acetyl-L-ornithine (cyclic): step 1/1. It participates in amino-acid biosynthesis; L-arginine biosynthesis; N(2)-acetyl-L-ornithine from L-glutamate: step 1/4. Catalyzes two activities which are involved in the cyclic version of arginine biosynthesis: the synthesis of N-acetylglutamate from glutamate and acetyl-CoA as the acetyl donor, and of ornithine by transacetylation between N(2)-acetylornithine and glutamate. The sequence is that of Arginine biosynthesis bifunctional protein ArgJ from Bordetella pertussis (strain Tohama I / ATCC BAA-589 / NCTC 13251).